The chain runs to 1156 residues: GPI inositol-deacylase (1156 aa).

The interval 1 to 95 (MHRRSSGSPV…AMATASTETK (95 aa)) is disordered. 2 stretches are compositionally biased toward polar residues: residues 20 to 37 (VSRS…NNAF) and 61 to 72 (GASTPRSRNSGL). Residues 75–95 (TPSSSSTSSTTAMATASTETK) are compositionally biased toward low complexity. A helical transmembrane segment spans residues 131-151 (TCSILTALTTLVASVFLFFIV). The active site involves Ser318. A run of 2 helical transmembrane segments spans residues 797-817 (LVMR…ALVL) and 845-865 (FPIL…SAQI). Asn877 carries N-linked (GlcNAc...) asparagine glycosylation. Transmembrane regions (helical) follow at residues 897–917 (AFFW…CVIL) and 966–986 (ILLV…VACI). A glycan (N-linked (GlcNAc...) asparagine) is linked at Asn1009. 4 helical membrane-spanning segments follow: residues 1016–1036 (SIFI…LVWA), 1053–1073 (VLSI…AMIP), 1081–1101 (HVTS…GVSY), and 1102–1122 (AYLL…IYFF).

Belongs to the GPI inositol-deacylase family.

The protein resides in the endoplasmic reticulum membrane. In terms of biological role, involved in inositol deacylation of GPI-anchored proteins which plays important roles in the quality control and ER-associated degradation of GPI-anchored proteins. This chain is GPI inositol-deacylase (bst1), found in Aspergillus fumigatus (strain ATCC MYA-4609 / CBS 101355 / FGSC A1100 / Af293) (Neosartorya fumigata).